Reading from the N-terminus, the 209-residue chain is Small ribosomal subunit protein eS1 (209 aa).

It belongs to the eukaryotic ribosomal protein eS1 family.

The protein is Small ribosomal subunit protein eS1 of Picrophilus torridus (strain ATCC 700027 / DSM 9790 / JCM 10055 / NBRC 100828 / KAW 2/3).